Consider the following 336-residue polypeptide: Ferrochelatase (336 aa).

Fe cation is bound by residues His206 and Glu287.

It belongs to the ferrochelatase family.

The protein localises to the cytoplasm. It carries out the reaction heme b + 2 H(+) = protoporphyrin IX + Fe(2+). Its pathway is porphyrin-containing compound metabolism; protoheme biosynthesis; protoheme from protoporphyrin-IX: step 1/1. Catalyzes the ferrous insertion into protoporphyrin IX. The chain is Ferrochelatase from Neisseria meningitidis serogroup B (strain ATCC BAA-335 / MC58).